Consider the following 228-residue polypeptide: Ribosomal RNA small subunit methyltransferase G (228 aa).

S-adenosyl-L-methionine-binding positions include glycine 82, leucine 87, 105-107 (DAT), 133-134 (VE), and arginine 147.

Belongs to the methyltransferase superfamily. RNA methyltransferase RsmG family.

The protein localises to the cytoplasm. Its function is as follows. Specifically methylates the N7 position of a guanine in 16S rRNA. This chain is Ribosomal RNA small subunit methyltransferase G, found in Pelodictyon phaeoclathratiforme (strain DSM 5477 / BU-1).